Consider the following 147-residue polypeptide: Putative pre-16S rRNA nuclease (147 aa).

This sequence belongs to the YqgF nuclease family.

It localises to the cytoplasm. Could be a nuclease involved in processing of the 5'-end of pre-16S rRNA. In Acinetobacter baylyi (strain ATCC 33305 / BD413 / ADP1), this protein is Putative pre-16S rRNA nuclease.